A 223-amino-acid chain; its full sequence is Neurotrophic factor BDNF precursor form (223 aa).

A signal peptide spans 1-5; that stretch reads SCMKA. Positions 6 to 114 are excised as a propeptide; that stretch reads APMKEVGVRG…AANMSXRVRR (109 aa). N-linked (GlcNAc...) asparagine glycosylation is present at N107. 2 disulfide bridges follow: C127-C194 and C172-C223.

This sequence belongs to the NGF-beta family.

Its subcellular location is the secreted. In terms of biological role, promotes the survival of neuronal populations that are all located either in the central nervous system or directly connected to it. This is Neurotrophic factor BDNF precursor form (BDNF) from Eryx jayakari (Arabian sand boa).